The following is a 593-amino-acid chain: NADH-quinone oxidoreductase subunit C/D (593 aa).

Positions 1-184 are NADH dehydrogenase I subunit C; that stretch reads MTADNAIFIP…DPYSLTLAKQ (184 aa). Residues 208 to 593 are NADH dehydrogenase I subunit D; the sequence is DYMFLNLGPN…IDFVMADVDR (386 aa).

The protein in the N-terminal section; belongs to the complex I 30 kDa subunit family. This sequence in the C-terminal section; belongs to the complex I 49 kDa subunit family. As to quaternary structure, NDH-1 is composed of 13 different subunits. Subunits NuoB, CD, E, F, and G constitute the peripheral sector of the complex.

The protein localises to the cell inner membrane. The enzyme catalyses a quinone + NADH + 5 H(+)(in) = a quinol + NAD(+) + 4 H(+)(out). In terms of biological role, NDH-1 shuttles electrons from NADH, via FMN and iron-sulfur (Fe-S) centers, to quinones in the respiratory chain. The immediate electron acceptor for the enzyme in this species is believed to be ubiquinone. Couples the redox reaction to proton translocation (for every two electrons transferred, four hydrogen ions are translocated across the cytoplasmic membrane), and thus conserves the redox energy in a proton gradient. The chain is NADH-quinone oxidoreductase subunit C/D from Pseudomonas putida (strain ATCC 700007 / DSM 6899 / JCM 31910 / BCRC 17059 / LMG 24140 / F1).